We begin with the raw amino-acid sequence, 105 residues long: Small ribosomal subunit protein bS6 (105 aa).

Belongs to the bacterial ribosomal protein bS6 family.

Its function is as follows. Binds together with bS18 to 16S ribosomal RNA. This Lawsonia intracellularis (strain PHE/MN1-00) protein is Small ribosomal subunit protein bS6.